Consider the following 320-residue polypeptide: Malate dehydrogenase (320 aa).

Residues 10–15 and Asp34 each bind NAD(+); that span reads GAGQIG. Arg83 and Arg89 together coordinate substrate. Residues Asn96 and 119–121 each bind NAD(+); that span reads ITN. Substrate contacts are provided by Asn121 and Arg152. Catalysis depends on His176, which acts as the Proton acceptor.

It belongs to the LDH/MDH superfamily. MDH type 3 family.

It catalyses the reaction (S)-malate + NAD(+) = oxaloacetate + NADH + H(+). In terms of biological role, catalyzes the reversible oxidation of malate to oxaloacetate. This chain is Malate dehydrogenase, found in Cereibacter sphaeroides (strain ATCC 17029 / ATH 2.4.9) (Rhodobacter sphaeroides).